The sequence spans 120 residues: Histone H2B (120 aa).

Residues 1–26 (MAEPAKKKPKKLPKKDKGQKDIKRKK) form a disordered region. Residue A2 is modified to Blocked amino end (Ala). K7, K10, and K11 each carry N6-acetyllysine. K115 participates in a covalent cross-link: Glycyl lysine isopeptide (Lys-Gly) (interchain with G-Cter in ubiquitin).

This sequence belongs to the histone H2B family. In terms of assembly, the nucleosome is a histone octamer containing two molecules each of H2A, H2B, H3 and H4 assembled in one H3-H4 heterotetramer and two H2A-H2B heterodimers. The octamer wraps approximately 147 bp of DNA. Can be acetylated to form H2BK6ac, H2BK33ac and H2BK34ac. Post-translationally, monoubiquitinated to form H2BK143ub1; may give a specific tag for epigenetic transcriptional activation.

It is found in the nucleus. The protein localises to the chromosome. Core component of nucleosome. Nucleosomes wrap and compact DNA into chromatin, limiting DNA accessibility to the cellular machineries which require DNA as a template. Histones thereby play a central role in transcription regulation, DNA repair, DNA replication and chromosomal stability. DNA accessibility is regulated via a complex set of post-translational modifications of histones, also called histone code, and nucleosome remodeling. This chain is Histone H2B, found in Pisum sativum (Garden pea).